Reading from the N-terminus, the 327-residue chain is Ribosomal RNA small subunit methyltransferase H (327 aa).

Residues 41 to 43, Asp-60, Tyr-87, Asp-108, and Gln-115 contribute to the S-adenosyl-L-methionine site; that span reads GGH. The interval 292-327 is disordered; it reads AERADEQETLENPRAASARLRAVERLRETTTPGSAR.

This sequence belongs to the methyltransferase superfamily. RsmH family.

The protein resides in the cytoplasm. The catalysed reaction is cytidine(1402) in 16S rRNA + S-adenosyl-L-methionine = N(4)-methylcytidine(1402) in 16S rRNA + S-adenosyl-L-homocysteine + H(+). In terms of biological role, specifically methylates the N4 position of cytidine in position 1402 (C1402) of 16S rRNA. In Kocuria rhizophila (strain ATCC 9341 / DSM 348 / NBRC 103217 / DC2201), this protein is Ribosomal RNA small subunit methyltransferase H.